A 378-amino-acid chain; its full sequence is Probable serine/threonine-protein kinase PBL7 (378 aa).

The disordered stretch occupies residues 1–49 (MGWIPCSGKSSGRNKTRRNGDHKLDRKSSDCSVSTSEKSRAKSSLSESK). A lipid anchor (N-myristoyl glycine) is attached at Gly-2. A compositionally biased stretch (basic and acidic residues) spans 18-29 (RNGDHKLDRKSS). Residues 32-47 (SVSTSEKSRAKSSLSE) are compositionally biased toward low complexity. Residue Thr-62 is modified to Phosphothreonine. One can recognise a Protein kinase domain in the interval 73–350 (FRKECLIGEG…ADVVTALSYL (278 aa)). ATP-binding positions include 79–87 (IGEGGFGRV) and Lys-102. Phosphotyrosine is present on Tyr-147. Asp-200 functions as the Proton acceptor in the catalytic mechanism. Phosphoserine is present on residues Ser-204 and Ser-234. Phosphothreonine is present on residues Thr-235 and Thr-240. Tyr-248 carries the post-translational modification Phosphotyrosine.

It belongs to the protein kinase superfamily. Ser/Thr protein kinase family. Interacts with BSU1 and BSL1. Post-translationally, phosphorylated at Ser-43, Ser-46 and Ser-234. As to expression, widely expressed.

It is found in the cell membrane. The catalysed reaction is L-seryl-[protein] + ATP = O-phospho-L-seryl-[protein] + ADP + H(+). It carries out the reaction L-threonyl-[protein] + ATP = O-phospho-L-threonyl-[protein] + ADP + H(+). Functionally, serine/threonine-protein kinase involved in the positive regulation of brassinosteroid (BR) signaling and plant growth. Phosphorylates both BSU1 and BSL1 in vitro. The chain is Probable serine/threonine-protein kinase PBL7 from Arabidopsis thaliana (Mouse-ear cress).